A 131-amino-acid chain; its full sequence is Profilin-1 (131 aa).

It belongs to the profilin family. In terms of assembly, occurs in many kinds of cells as a complex with monomeric actin in a 1:1 ratio.

It localises to the cytoplasm. The protein localises to the cytoskeleton. Functionally, binds to actin and affects the structure of the cytoskeleton. At high concentrations, profilin prevents the polymerization of actin, whereas it enhances it at low concentrations. By binding to PIP2, it inhibits the formation of IP3 and DG. The polypeptide is Profilin-1 (PRO1) (Hordeum vulgare (Barley)).